Consider the following 59-residue polypeptide: Membrane-associated ATPase epsilon chain (59 aa).

To E.hirae NtpH. In terms of assembly, sul-ATPase is composed of six (or maybe five) subunits: alpha, beta, delta, gamma, C (proteolipid), and possibly epsilon.

It catalyses the reaction ATP + H2O + 4 H(+)(in) = ADP + phosphate + 5 H(+)(out). This Sulfurisphaera tokodaii (strain DSM 16993 / JCM 10545 / NBRC 100140 / 7) (Sulfolobus tokodaii) protein is Membrane-associated ATPase epsilon chain (atpE).